A 739-amino-acid polypeptide reads, in one-letter code: Alcohol dehydrogenase (quinone), dehydrogenase subunit (739 aa).

A signal peptide spans methionine 1 to alanine 35. Pyrroloquinoline quinone is bound at residue glutamate 97. An intrachain disulfide couples cysteine 143 to cysteine 144. A pyrroloquinoline quinone-binding site is contributed by arginine 149. Position 217 (glutamate 217) interacts with Ca(2+). Threonine 279 is a binding site for pyrroloquinoline quinone. Asparagine 299 and aspartate 344 together coordinate Ca(2+). The Proton acceptor role is filled by aspartate 344. Positions 371 and 585 each coordinate pyrroloquinoline quinone. The Cytochrome c domain maps to phenylalanine 635–proline 739. Heme c is bound by residues cysteine 651, cysteine 654, histidine 655, and methionine 694.

This sequence belongs to the bacterial PQQ dehydrogenase family. The alcohol dehydrogenase multicomponent enzyme system is composed of a dehydrogenase subunit I (AdhA) and a cytochrome c subunit II (AdhB). Pyrroloquinoline quinone is required as a cofactor. Requires Ca(2+) as cofactor. The cofactor is heme c.

Its subcellular location is the cell membrane. The enzyme catalyses ethanol + a ubiquinone = a ubiquinol + acetaldehyde. In terms of biological role, dehydrogenase component of the alcohol dehydrogenase multicomponent enzyme system which is involved in the production of acetic acid and in the ethanol oxidase respiratory chain. Quinohemoprotein alcohol dehydrogenase (ADH) catalyzes the oxidation of ethanol to acetaldehyde by transferring electrons to the ubiquinone embedded in the membrane phospholipids. The electrons transfer from ethanol to membranous ubiquinone occurs from pyrroloquinoline quinone (PQQ) to one heme c in subunit I (AdhA), and finally to two heme c in subunit II (AdhB). Besides ubiquinone reduction, ADH also has a ubiquinol (QH2) oxidation reaction which mediates electron transfer from ubiquinol to the non-energy generating bypass oxidase system. The electrons transfer occurs from ubiquinol (QH2) to the additional heme c within subunit II (AdhB). This Komagataeibacter europaeus (Gluconacetobacter europaeus) protein is Alcohol dehydrogenase (quinone), dehydrogenase subunit.